The chain runs to 214 residues: Putative glucose-6-phosphate isomerase 1 (214 aa).

The Fe cation site is built by histidine 92, histidine 94, glutamate 101, and histidine 140.

The protein belongs to the archaeal-type GPI family. In terms of assembly, homodimer. Fe cation serves as cofactor.

The protein localises to the cytoplasm. It catalyses the reaction alpha-D-glucose 6-phosphate = beta-D-fructose 6-phosphate. Its pathway is carbohydrate degradation; glycolysis; D-glyceraldehyde 3-phosphate and glycerone phosphate from D-glucose: step 2/4. In Rhizobium meliloti (strain 1021) (Ensifer meliloti), this protein is Putative glucose-6-phosphate isomerase 1 (pgiA1).